Reading from the N-terminus, the 360-residue chain is ELAV-like protein 2 (360 aa).

The tract at residues 1 to 36 (METQLSNGPTCNNTANGPTTVNNNCSSPVDSGNTED) is disordered. RRM domains follow at residues 39–117 (TNLI…YARP) and 125–205 (ANLY…FANN). Serine 221 carries the phosphoserine modification. The region spanning 277 to 355 (WCIFVYNLAP…RVLQVSFKTN (79 aa)) is the RRM 3 domain.

The protein belongs to the RRM elav family. Interacts with IGF2BP1. Interacts with MAP1B light chain LC1. Brain; neural-specific. Expressed in the hippocampus.

Functionally, RNA-binding protein that binds to the 3' untranslated region (3'UTR) of target mRNAs. Seems to recognize a GAAA motif. Can bind to its own 3'UTR, the FOS 3'UTR and the ID 3'UTR. This is ELAV-like protein 2 (Elavl2) from Mus musculus (Mouse).